Consider the following 211-residue polypeptide: Uracil phosphoribosyltransferase (211 aa).

5-phospho-alpha-D-ribose 1-diphosphate contacts are provided by residues Arg78, Arg103, and Asp130–Ser138. Uracil is bound by residues Ile193 and Gly198–Ala200. Asp199 serves as a coordination point for 5-phospho-alpha-D-ribose 1-diphosphate.

Belongs to the UPRTase family. It depends on Mg(2+) as a cofactor.

The enzyme catalyses UMP + diphosphate = 5-phospho-alpha-D-ribose 1-diphosphate + uracil. Its pathway is pyrimidine metabolism; UMP biosynthesis via salvage pathway; UMP from uracil: step 1/1. Its activity is regulated as follows. Allosterically activated by GTP. Its function is as follows. Catalyzes the conversion of uracil and 5-phospho-alpha-D-ribose 1-diphosphate (PRPP) to UMP and diphosphate. This Hahella chejuensis (strain KCTC 2396) protein is Uracil phosphoribosyltransferase.